Consider the following 336-residue polypeptide: Dihydroorotate dehydrogenase (quinone) (336 aa).

FMN-binding positions include 62-66 (AGLDK) and Thr86. Substrate is bound at residue Lys66. Position 111 to 115 (111 to 115 (NRMGF)) interacts with substrate. Residues Asn139 and Asn172 each coordinate FMN. Position 172 (Asn172) interacts with substrate. The Nucleophile role is filled by Ser175. Asn177 is a binding site for substrate. The FMN site is built by Lys217 and Thr245. Residue 246-247 (NT) participates in substrate binding. FMN-binding positions include Gly268, Gly297, and 318-319 (YS).

The protein belongs to the dihydroorotate dehydrogenase family. Type 2 subfamily. In terms of assembly, monomer. The cofactor is FMN.

The protein resides in the cell membrane. It carries out the reaction (S)-dihydroorotate + a quinone = orotate + a quinol. Its pathway is pyrimidine metabolism; UMP biosynthesis via de novo pathway; orotate from (S)-dihydroorotate (quinone route): step 1/1. Functionally, catalyzes the conversion of dihydroorotate to orotate with quinone as electron acceptor. This Serratia proteamaculans (strain 568) protein is Dihydroorotate dehydrogenase (quinone).